The primary structure comprises 677 residues: UvrABC system protein B (677 aa).

The region spanning 24–412 (EGVLEGVPAQ…EGIVVEQVIR (389 aa)) is the Helicase ATP-binding domain. 37-44 (GVTGSGKT) is a binding site for ATP. Positions 90–113 (YYDYYQPEAYLPSSDTYIEKDLAI) match the Beta-hairpin motif. The region spanning 429-591 (QIDDLMEEIQ…ITPQQIKKAR (163 aa)) is the Helicase C-terminal domain. The 36-residue stretch at 635-670 (EKSMERTRKLMQEAAKKLEFIEAAQYRDELLKMEDL) folds into the UVR domain.

It belongs to the UvrB family. Forms a heterotetramer with UvrA during the search for lesions. Interacts with UvrC in an incision complex.

It is found in the cytoplasm. Functionally, the UvrABC repair system catalyzes the recognition and processing of DNA lesions. A damage recognition complex composed of 2 UvrA and 2 UvrB subunits scans DNA for abnormalities. Upon binding of the UvrA(2)B(2) complex to a putative damaged site, the DNA wraps around one UvrB monomer. DNA wrap is dependent on ATP binding by UvrB and probably causes local melting of the DNA helix, facilitating insertion of UvrB beta-hairpin between the DNA strands. Then UvrB probes one DNA strand for the presence of a lesion. If a lesion is found the UvrA subunits dissociate and the UvrB-DNA preincision complex is formed. This complex is subsequently bound by UvrC and the second UvrB is released. If no lesion is found, the DNA wraps around the other UvrB subunit that will check the other stand for damage. The chain is UvrABC system protein B from Bacteroides fragilis (strain YCH46).